Reading from the N-terminus, the 80-residue chain is Conotoxin Cl11.2 (80 aa).

The N-terminal stretch at M1–G19 is a signal peptide. The propeptide occupies E20–Q41. 4 disulfides stabilise this stretch: C45-C59, C52-C63, C58-C68, and C62-C74.

The protein belongs to the conotoxin I1 superfamily. In terms of tissue distribution, expressed by the venom duct.

It localises to the secreted. In Californiconus californicus (California cone), this protein is Conotoxin Cl11.2.